A 133-amino-acid polypeptide reads, in one-letter code: Ribosome-binding factor A (133 aa).

This sequence belongs to the RbfA family. As to quaternary structure, monomer. Binds 30S ribosomal subunits, but not 50S ribosomal subunits or 70S ribosomes.

Its subcellular location is the cytoplasm. Functionally, one of several proteins that assist in the late maturation steps of the functional core of the 30S ribosomal subunit. Associates with free 30S ribosomal subunits (but not with 30S subunits that are part of 70S ribosomes or polysomes). Required for efficient processing of 16S rRNA. May interact with the 5'-terminal helix region of 16S rRNA. The sequence is that of Ribosome-binding factor A from Citrobacter koseri (strain ATCC BAA-895 / CDC 4225-83 / SGSC4696).